The primary structure comprises 704 residues: UvrABC system protein C (704 aa).

The tract at residues Met1 to Ala77 is disordered. Acidic residues predominate over residues Val49–Ala66. The span at Glu67–Ala77 shows a compositional bias: low complexity. Positions Thr92 to Val170 constitute a GIY-YIG domain. A UVR domain is found at Arg280–Ile315.

This sequence belongs to the UvrC family. Interacts with UvrB in an incision complex.

It is found in the cytoplasm. In terms of biological role, the UvrABC repair system catalyzes the recognition and processing of DNA lesions. UvrC both incises the 5' and 3' sides of the lesion. The N-terminal half is responsible for the 3' incision and the C-terminal half is responsible for the 5' incision. The chain is UvrABC system protein C from Rhodopseudomonas palustris (strain ATCC BAA-98 / CGA009).